Consider the following 280-residue polypeptide: Trypsin zeta (280 aa).

An N-terminal signal peptide occupies residues 1–22; the sequence is MSSSWIVGLLAFLVSLVALTQG. The propeptide at 23 to 38 is activation peptide; sequence LPLLEDLDEKSVPDGR. In terms of domain architecture, Peptidase S1 spans 39-278; that stretch reads IVGGYATDIA…LRPWIDAVLA (240 aa). Cysteine 72 and cysteine 88 form a disulfide bridge. Active-site charge relay system residues include histidine 87 and aspartate 134. Cystine bridges form between cysteine 198/cysteine 218 and cysteine 230/cysteine 254. Serine 234 acts as the Charge relay system in catalysis.

It belongs to the peptidase S1 family.

It is found in the secreted. It localises to the extracellular space. It carries out the reaction Preferential cleavage: Arg-|-Xaa, Lys-|-Xaa.. This is Trypsin zeta (zetaTry) from Drosophila melanogaster (Fruit fly).